Consider the following 252-residue polypeptide: Hydroxyacylglutathione hydrolase (252 aa).

Zn(2+)-binding residues include H54, H56, D58, H59, H111, D130, and H170.

It belongs to the metallo-beta-lactamase superfamily. Glyoxalase II family. In terms of assembly, monomer. It depends on Zn(2+) as a cofactor.

It carries out the reaction an S-(2-hydroxyacyl)glutathione + H2O = a 2-hydroxy carboxylate + glutathione + H(+). It participates in secondary metabolite metabolism; methylglyoxal degradation; (R)-lactate from methylglyoxal: step 2/2. Thiolesterase that catalyzes the hydrolysis of S-D-lactoyl-glutathione to form glutathione and D-lactic acid. In Francisella philomiragia subsp. philomiragia (strain ATCC 25017 / CCUG 19701 / FSC 153 / O#319-036), this protein is Hydroxyacylglutathione hydrolase.